Here is a 283-residue protein sequence, read N- to C-terminus: Foldase protein PrsA 3 (283 aa).

The signal sequence occupies residues 1–21 (MKKKKLFLGTIISCVVLALSA). A lipid anchor (N-palmitoyl cysteine) is attached at Cys-22. The S-diacylglycerol cysteine moiety is linked to residue Cys-22. The 91-residue stretch at 132–222 (KPEMKVSHIL…YGYHIIKVTD (91 aa)) folds into the PpiC domain.

Belongs to the PrsA family.

Its subcellular location is the cell membrane. The catalysed reaction is [protein]-peptidylproline (omega=180) = [protein]-peptidylproline (omega=0). In terms of biological role, plays a major role in protein secretion by helping the post-translocational extracellular folding of several secreted proteins. Important for the secretion of the protective antigen. The three PsrA proteins in this organism show different but overlapping substrate specificities. The polypeptide is Foldase protein PrsA 3 (prsA3) (Bacillus anthracis).